A 215-amino-acid chain; its full sequence is Vesicle-trafficking protein SEC22b-B (215 aa).

At 1–190 (MVLLTMIARL…RSDAKYLNTR (190 aa)) the chain is on the cytoplasmic side. The Longin domain maps to 6-119 (MIARLADGLP…YSFIEFDTYI (114 aa)). Residues 134–194 (NLSNINTELQ…KYLNTRSTYA (61 aa)) enclose the v-SNARE coiled-coil homology domain. A helical membrane pass occupies residues 191–213 (STYAKLAAGGVFFIMLIVYIRFW). Residues 214–215 (WL) lie on the Lumenal side of the membrane.

The protein belongs to the synaptobrevin family. As to quaternary structure, component of 2 distinct SNARE complexes.

The protein resides in the endoplasmic reticulum membrane. Its subcellular location is the endoplasmic reticulum-Golgi intermediate compartment membrane. It localises to the golgi apparatus. The protein localises to the cis-Golgi network membrane. It is found in the trans-Golgi network membrane. The protein resides in the melanosome. Functionally, SNARE involved in targeting and fusion of ER-derived transport vesicles with the Golgi complex as well as Golgi-derived retrograde transport vesicles with the ER. This is Vesicle-trafficking protein SEC22b-B from Danio rerio (Zebrafish).